The sequence spans 322 residues: Replication factor C small subunit (322 aa).

Position 46–53 (46–53) interacts with ATP; it reads GSAGIGKT.

This sequence belongs to the activator 1 small subunits family. RfcS subfamily. Heteromultimer composed of small subunits (RfcS) and large subunits (RfcL).

In terms of biological role, part of the RFC clamp loader complex which loads the PCNA sliding clamp onto DNA. In Methanoculleus marisnigri (strain ATCC 35101 / DSM 1498 / JR1), this protein is Replication factor C small subunit.